Reading from the N-terminus, the 453-residue chain is UPF0210 protein Pcar_2119 (453 aa).

The protein belongs to the UPF0210 family. In terms of assembly, homodimer.

The polypeptide is UPF0210 protein Pcar_2119 (Syntrophotalea carbinolica (strain DSM 2380 / NBRC 103641 / GraBd1) (Pelobacter carbinolicus)).